Consider the following 503-residue polypeptide: Alpha-1B-glycoprotein (503 aa).

Residues Met1 to Gln21 form the signal peptide. 5 Ig-like V-type domains span residues Pro27 to Gly115, Glu117 to Ile204, Asp208 to Ser305, Gly307 to Asp405, and Gly406 to Ala501. An intrachain disulfide couples Cys49 to Cys96. Asn137 and Asn182 each carry an N-linked (GlcNAc...) asparagine glycan. 4 disulfide bridges follow: Cys142-Cys185, Cys235-Cys282, Cys333-Cys382, and Cys431-Cys478. Asn379 is a glycosylation site (N-linked (GlcNAc...) asparagine).

Interacts with CRISP3. In terms of tissue distribution, plasma.

Its subcellular location is the secreted. This chain is Alpha-1B-glycoprotein, found in Bos taurus (Bovine).